A 472-amino-acid chain; its full sequence is FAD-linked oxidoreductase azaL (472 aa).

The signal sequence occupies residues 1–18 (MFRTILLCSLGLTTLSSA). Residues asparagine 22, asparagine 44, asparagine 102, asparagine 123, asparagine 227, asparagine 246, asparagine 273, asparagine 305, asparagine 318, asparagine 390, and asparagine 415 are each glycosylated (N-linked (GlcNAc...) asparagine). Residues 54–228 (TTYDAPTYIG…TSATYKIYNA (175 aa)) form the FAD-binding PCMH-type domain.

It belongs to the oxygen-dependent FAD-linked oxidoreductase family.

It participates in secondary metabolite biosynthesis. Functionally, FAD-linked oxidoreductase; part of the gene cluster that mediates the biosynthesis of azaphilones, a class of fungal metabolites characterized by a highly oxygenated pyrano-quinone bicyclic core and exhibiting a broad range of bioactivities. In the first step, the non-reducing polyketide synthase azaA forms the hexaketide precursor from successive condensations of five malonyl-CoA units, presumably with a simple acetyl-CoA starter unit. The reactive polyketide chain then undergoes a PT-mediated C2-C7 cyclization to afford the aromatic ring and is eventually released as an aldehyde through the R-domain. The putative ketoreductase azaE is proposed to catalyze the reduction of the terminal ketone resulting in the early culture product FK17-P2a. The monooxygenase azaH was demonstrated to be the only enzyme required to convert FK17-P2a to azanigerone E. AzaH first hydroxylates the benzaldehyde intermediate FK17-P2a at C4, which triggers the formation of the pyran-ring to afford azanigerone E. In parallel, the 2,4-dimethylhexanoyl chain is synthesized by the HR-PKS azaB and is proposed to be transferred to the C4-hydroxyl of azanigerone E by the acyltransferase azaD directly from the ACP domain of azaB. Alternatively, the 2,4-dimethyl-hexanoyl chain may be offloaded from the HR-PKS as a carboxylic acid and converted to an acyl-CoA by azaF. The resulting acyl-CoA molecule could then be taken up as a substrate by AzaD to form azanigerone B. To yield the carboxylic acid substituent in azanigerone A, the hydroxypropyl side chain of azanigerone B would need to undergo a C-C oxidative cleavage catalyzed by cytochrome P450 AzaI. AzaI is proposed to act on a vicinal diol that leads to a C-C bond scission either through an alkoxyradical intermediate or a peroxy complex. In the biosynthesis of azanigerone A, azanigerone B first undergoes hydroxylation at C10, possibly catalyzed by one of the two FAD-dependent monooxygenases encoded in the cluster, azaG or azaL, resulting in the vicinal diol azanigerone C. Oxidative cleavage of azanigerone C by azaI would yield the corresponding aldehyde derivative of azanigerone A. Finally, the dehydrogenase azaJ is proposed to convert the aldehyde functional group into the carboxylic acid, completing the conversion from azanigerone B to azanigerone A. Alternatively, the oxidation of aldehyde to carboxylic acid may be catalyzed by the same P450 enzyme azaI via consecutive oxidation or by endogenous alcohol dehydrogenase. This chain is FAD-linked oxidoreductase azaL, found in Aspergillus niger (strain ATCC 1015 / CBS 113.46 / FGSC A1144 / LSHB Ac4 / NCTC 3858a / NRRL 328 / USDA 3528.7).